The sequence spans 152 residues: Large ribosomal subunit protein eL29 (152 aa).

Residues 1-26 are compositionally biased toward basic residues; it reads MAKSKNHTTHNQSRKWHRNGIKKPRS. Positions 1-32 are disordered; it reads MAKSKNHTTHNQSRKWHRNGIKKPRSQRYESL. An N6-methyllysine modification is found at Lys-5. Phosphoserine is present on Ser-31. Lys-33 bears the N6-acetyllysine mark. A disordered region spans residues 119–152; it reads CRPKSQAKASTKAKPPAAAAPAAKGAQAPTKAPE. The segment covering 121–152 has biased composition (low complexity); that stretch reads PKSQAKASTKAKPPAAAAPAAKGAQAPTKAPE.

It belongs to the eukaryotic ribosomal protein eL29 family. Component of the large ribosomal subunit.

The protein resides in the cytoplasm. Functionally, component of the large ribosomal subunit. The ribosome is a large ribonucleoprotein complex responsible for the synthesis of proteins in the cell. This Bos taurus (Bovine) protein is Large ribosomal subunit protein eL29 (RPL29).